The following is a 795-amino-acid chain: Phenylalanine--tRNA ligase beta subunit (795 aa).

The region spanning 39 to 148 (AAKFNGVLVG…SDAPVGTDLR (110 aa)) is the tRNA-binding domain. The region spanning 401–476 (PKVTEVRLRR…RVYGYNSIPN (76 aa)) is the B5 domain. 4 residues coordinate Mg(2+): D454, D460, E463, and E464. An FDX-ACB domain is found at 701-794 (SKFPSNRRDI…LAEQFNASLR (94 aa)).

This sequence belongs to the phenylalanyl-tRNA synthetase beta subunit family. Type 1 subfamily. As to quaternary structure, tetramer of two alpha and two beta subunits. Mg(2+) serves as cofactor.

It is found in the cytoplasm. It carries out the reaction tRNA(Phe) + L-phenylalanine + ATP = L-phenylalanyl-tRNA(Phe) + AMP + diphosphate + H(+). The chain is Phenylalanine--tRNA ligase beta subunit from Pseudoalteromonas translucida (strain TAC 125).